The chain runs to 252 residues: 5-oxoprolinase subunit A (252 aa).

The protein belongs to the LamB/PxpA family. Forms a complex composed of PxpA, PxpB and PxpC.

The catalysed reaction is 5-oxo-L-proline + ATP + 2 H2O = L-glutamate + ADP + phosphate + H(+). Catalyzes the cleavage of 5-oxoproline to form L-glutamate coupled to the hydrolysis of ATP to ADP and inorganic phosphate. This is 5-oxoprolinase subunit A from Staphylococcus carnosus (strain TM300).